The sequence spans 600 residues: Fructan 1-exohydrolase (600 aa).

Residues 1 to 27 (MAQAWAFLLPVLFFGSYVTNLFLPTYA) form the signal peptide. D73 is an active-site residue. N166, N234, and N246 each carry an N-linked (GlcNAc...) asparagine glycan. C444 and C490 form a disulfide bridge. A glycan (N-linked (GlcNAc...) asparagine) is linked at N565.

This sequence belongs to the glycosyl hydrolase 32 family.

It catalyses the reaction Hydrolysis of terminal, non-reducing (2-&gt;1)-linked beta-D-fructofuranose residues in fructans.. Its activity is regulated as follows. Inhibited by sucrose. Its function is as follows. Hydrolyzes inulin-type beta-(2,1)-fructans. May play a role as a beta-(2,1)-trimmer during graminan biosynthesis. The protein is Fructan 1-exohydrolase of Leymus chinensis (Chinese lyme grass).